The sequence spans 80 residues: Cytochrome c oxidase subunit 7A1, mitochondrial (80 aa).

A mitochondrion-targeting transit peptide spans M1–R21. The Mitochondrial matrix portion of the chain corresponds to L22–G46. Residues V47–S75 form a helical membrane-spanning segment. The Mitochondrial intermembrane portion of the chain corresponds to F76–K80.

The protein belongs to the cytochrome c oxidase VIIa family. In terms of assembly, component of the complex IV (CIV, cytochrome c oxidase), a multisubunit enzyme composed of 14 subunits. The complex is composed of a catalytic core of 3 subunits MT-CO1, MT-CO2 and MT-CO3, encoded in the mitochondrial DNA, and 11 supernumerary subunits COX4I1 (or COX4I2), COX5A, COX5B, COX6A2 (or COX6A1), COX6B1 (or COX6B2), COX6C, COX7A1 (or COX7A2), COX7B, COX7C, COX8B and NDUFA4, which are encoded in the nuclear genome. The complex exists as a monomer or a dimer and forms supercomplexes (SCs) in the inner mitochondrial membrane with NADH-ubiquinone oxidoreductase (complex I, CI) and ubiquinol-cytochrome c oxidoreductase (cytochrome b-c1 complex, complex III, CIII), resulting in different assemblies (supercomplex SCI(1)III(2)IV(1) and megacomplex MCI(2)III(2)IV(2)).

It localises to the mitochondrion inner membrane. The protein operates within energy metabolism; oxidative phosphorylation. Its function is as follows. Component of the mitochondrial respiratory complex IV (CIV, also named cytochrome c oxidase complex), the last enzyme in the mitochondrial electron transport chain which drives oxidative phosphorylation. The CIV complex is the component of the respiratory chain that catalyzes the reduction of oxygen to water. Acts as an assembly factor that specifically drives the homodimerization of CIV complexes, mediating the formation of mitochondrial respiratory supercomplexes (respirasomes) containing two CIV: supercomplxes with two molecules of CIV show improved activity. Despite being highly expressed in brown adipose tissue, not required for thermogenesis. The chain is Cytochrome c oxidase subunit 7A1, mitochondrial (COX7A1) from Saimiri sciureus (Common squirrel monkey).